The chain runs to 485 residues: Glutamate--tRNA ligase (485 aa).

The 'HIGH' region motif lies at 11–21 (PSPTGYMHVGN). Zn(2+) is bound by residues cysteine 108, cysteine 110, cysteine 135, and aspartate 137. A 'KMSKS' region motif is present at residues 252 to 256 (KLSKR). Lysine 255 contacts ATP.

It belongs to the class-I aminoacyl-tRNA synthetase family. Glutamate--tRNA ligase type 1 subfamily. In terms of assembly, monomer. It depends on Zn(2+) as a cofactor.

The protein localises to the cytoplasm. The catalysed reaction is tRNA(Glu) + L-glutamate + ATP = L-glutamyl-tRNA(Glu) + AMP + diphosphate. Its function is as follows. Catalyzes the attachment of glutamate to tRNA(Glu) in a two-step reaction: glutamate is first activated by ATP to form Glu-AMP and then transferred to the acceptor end of tRNA(Glu). In Clostridium botulinum (strain ATCC 19397 / Type A), this protein is Glutamate--tRNA ligase.